The primary structure comprises 370 residues: NSFL1 cofactor p47 (370 aa).

The tract at residues 54–73 is disordered; it reads SQATPSSVSRGTAPSDNRVT. A phosphoserine mark is found at Ser-74, Ser-102, Ser-114, and Ser-140. 2 disordered regions span residues 80 to 116 and 138 to 157; these read HDQDEEEEEEEGQRFYAGGSERSGQQIVGPPRKKSPN and TKSPGETSKPRPFAGGGYRL. Positions 109-115 match the Nuclear localization signal motif; that stretch reads PPRKKSP. Phosphotyrosine is present on Tyr-167. A Nuclear localization signal motif is present at residues 172–175; the sequence is RRRH. 3 positions are modified to phosphoserine: Ser-176, Ser-192, and Ser-272. One can recognise an SEP domain in the interval 179–244; sequence DVHVVLKLWK…MEDHRDEDFV (66 aa). A UBX domain is found at 291-368; the sequence is EAEPTTNIQI…NLLNAVIVQR (78 aa).

It belongs to the NSFL1C family. Part of a ternary complex containing STX5A, NSFL1C and VCP. NSFL1C forms a homotrimer that binds to one end of a VCP homohexamer. The complex binds to membranes enriched in phosphatidylethanolamine-containing lipids and promotes Golgi membrane fusion. Interaction with VCIP135 leads to dissociation of the complex via ATP hydrolysis by VCP. Binds ubiquitin and mono-ubiquitinated proteins via its N-terminal UBA-like domain when bound to VCP. In terms of processing, phosphorylated during mitosis. Phosphorylation inhibits interaction with Golgi membranes and is required for the fragmentation of the Golgi stacks during mitosis.

It localises to the nucleus. It is found in the golgi apparatus. The protein resides in the golgi stack. The protein localises to the chromosome. Its subcellular location is the cytoplasm. It localises to the cytoskeleton. It is found in the microtubule organizing center. The protein resides in the centrosome. In terms of biological role, reduces the ATPase activity of VCP. Necessary for the fragmentation of Golgi stacks during mitosis and for VCP-mediated reassembly of Golgi stacks after mitosis. May play a role in VCP-mediated formation of transitional endoplasmic reticulum (tER). Inhibits the activity of CTSL (in vitro). Together with UBXN2B/p37, regulates the centrosomal levels of kinase AURKA/Aurora A during mitotic progression by promoting AURKA removal from centrosomes in prophase. Also, regulates spindle orientation during mitosis. This Mus musculus (Mouse) protein is NSFL1 cofactor p47 (Nsfl1c).